A 576-amino-acid chain; its full sequence is Boron transporter 1 (576 aa).

The Cytoplasmic portion of the chain corresponds to 1–84; the sequence is MSNESTRVTV…SDWVDAFNYR (84 aa). The disordered stretch occupies residues 19-48; it reads ECAQALERTNDELDRESSVSESRSDEESHE. Residues 26 to 48 show a composition bias toward basic and acidic residues; the sequence is RTNDELDRESSVSESRSDEESHE. Residues 85-105 traverse the membrane as a helical segment; sequence VIPSIVDTYFNNLLPAIAFAQ. Over 106–116 the chain is Extracellular; it reads DMFDRTDNSYG. Residues 117-134 traverse the membrane as a helical segment; that stretch reads VNEVLLSSAMAGIVFGVL. The Cytoplasmic portion of the chain corresponds to 135–140; sequence GGQPLC. The chain crosses the membrane as a helical span at residues 141–160; the sequence is IVGVTGPISIFNYTVYEIIK. The Extracellular portion of the chain corresponds to 161-165; the sequence is PLNTS. A helical transmembrane segment spans residues 166–186; the sequence is YFGFMFWICMWSMIFHLVLAF. Residues 187-192 are Cytoplasmic-facing; sequence TNAVCL. The chain crosses the membrane as a helical span at residues 193-213; the sequence is LQYVTTFPCDIFGLFINVVYI. Residues 214–235 are Extracellular-facing; the sequence is QKGIQILTRQFSAKSGEKSVQD. A helical transmembrane segment spans residues 236 to 256; sequence GFASVVVALVMTAFGLFFKLF. Residues 257 to 274 lie on the Cytoplasmic side of the membrane; that stretch reads HYYPLFSHRIRTFISDYS. The chain crosses the membrane as a helical span at residues 275–295; sequence TALSVLFWSSFTHFGGYLHDV. At 296-329 the chain is on the extracellular side; it reads KFKKLPITKAFFPTSKVNRPQNTWLAYEPIPVKD. A helical transmembrane segment spans residues 330–350; sequence VFIALPFGIFLTILFYFDHNV. The Cytoplasmic portion of the chain corresponds to 351 to 373; it reads SSLMAQRHQYKLKKPSSFHYDFA. The helical transmembrane segment at 374–394 threads the bilayer; that stretch reads LLGLTTCISGVLGIPAPNGLI. At 395–438 the chain is on the extracellular side; it reads PQAPLHTETLLVRDSNQKVISCVEQRFTNTFQGLMILGTMTRPL. Residues 439 to 459 form a helical membrane-spanning segment; it reads LVCLGEIPQAVLSGLFFIMGI. The Cytoplasmic segment spans residues 460 to 495; that stretch reads NGLMTNSIIQRLVFLFSDPNRRDNTSPLMKVSKKSM. Residues 496–516 form a helical membrane-spanning segment; the sequence is LIFLSFSLTGFAGEFAITNTI. The Extracellular segment spans residues 517–518; it reads AA. A helical membrane pass occupies residues 519–539; it reads IGFPLVLLLSVLVSFSFAYIF. Topologically, residues 540-576 are cytoplasmic; that stretch reads PTEELKILDTNVAQKFTIKNLLLENIRDAKFCDKHED.

This sequence belongs to the anion exchanger (TC 2.A.31) family.

It is found in the cell membrane. It localises to the vacuole membrane. In terms of biological role, functions in boric acid/borate export across the plasma membrane, and thereby protects yeast cells from boron toxicity. Involved in the trafficking of proteins to the vacuole. The sequence is that of Boron transporter 1 (BOR1) from Saccharomyces cerevisiae (strain ATCC 204508 / S288c) (Baker's yeast).